We begin with the raw amino-acid sequence, 366 residues long: Chorismate synthase (366 aa).

NADP(+)-binding residues include Arg48 and Arg54. FMN-binding positions include 125–127 (RSS), 238–239 (NA), Gly278, 293–297 (KPTSS), and Arg319.

The protein belongs to the chorismate synthase family. As to quaternary structure, homotetramer. The cofactor is FMNH2.

The enzyme catalyses 5-O-(1-carboxyvinyl)-3-phosphoshikimate = chorismate + phosphate. Its pathway is metabolic intermediate biosynthesis; chorismate biosynthesis; chorismate from D-erythrose 4-phosphate and phosphoenolpyruvate: step 7/7. Catalyzes the anti-1,4-elimination of the C-3 phosphate and the C-6 proR hydrogen from 5-enolpyruvylshikimate-3-phosphate (EPSP) to yield chorismate, which is the branch point compound that serves as the starting substrate for the three terminal pathways of aromatic amino acid biosynthesis. This reaction introduces a second double bond into the aromatic ring system. This is Chorismate synthase from Neisseria gonorrhoeae (strain NCCP11945).